A 173-amino-acid polypeptide reads, in one-letter code: NADH-quinone oxidoreductase subunit B (173 aa).

4 residues coordinate [4Fe-4S] cluster: Cys-46, Cys-47, Cys-112, and Cys-142.

This sequence belongs to the complex I 20 kDa subunit family. In terms of assembly, NDH-1 is composed of 14 different subunits. Subunits NuoB, C, D, E, F, and G constitute the peripheral sector of the complex. The cofactor is [4Fe-4S] cluster.

It localises to the cell membrane. The catalysed reaction is a quinone + NADH + 5 H(+)(in) = a quinol + NAD(+) + 4 H(+)(out). In terms of biological role, NDH-1 shuttles electrons from NADH, via FMN and iron-sulfur (Fe-S) centers, to quinones in the respiratory chain. The immediate electron acceptor for the enzyme in this species is believed to be a menaquinone. Couples the redox reaction to proton translocation (for every two electrons transferred, four hydrogen ions are translocated across the cytoplasmic membrane), and thus conserves the redox energy in a proton gradient. The chain is NADH-quinone oxidoreductase subunit B from Desulfitobacterium hafniense (strain DSM 10664 / DCB-2).